A 304-amino-acid chain; its full sequence is Acetyl-coenzyme A carboxylase carboxyl transferase subunit beta (304 aa).

A CoA carboxyltransferase N-terminal domain is found at 23–292; it reads VWTKCDSCGQ…PNPEAPREGV (270 aa). Zn(2+) contacts are provided by Cys27, Cys30, Cys46, and Cys49. A C4-type zinc finger spans residues 27–49; that stretch reads CDSCGQVLYRAELERNLEVCPKC. Positions 284–304 are disordered; that stretch reads NPEAPREGVVVPPVPDQEPEA. Residues 295 to 304 show a composition bias toward pro residues; it reads PPVPDQEPEA.

Belongs to the AccD/PCCB family. In terms of assembly, acetyl-CoA carboxylase is a heterohexamer composed of biotin carboxyl carrier protein (AccB), biotin carboxylase (AccC) and two subunits each of ACCase subunit alpha (AccA) and ACCase subunit beta (AccD). The cofactor is Zn(2+).

It is found in the cytoplasm. It catalyses the reaction N(6)-carboxybiotinyl-L-lysyl-[protein] + acetyl-CoA = N(6)-biotinyl-L-lysyl-[protein] + malonyl-CoA. It participates in lipid metabolism; malonyl-CoA biosynthesis; malonyl-CoA from acetyl-CoA: step 1/1. Functionally, component of the acetyl coenzyme A carboxylase (ACC) complex. Biotin carboxylase (BC) catalyzes the carboxylation of biotin on its carrier protein (BCCP) and then the CO(2) group is transferred by the transcarboxylase to acetyl-CoA to form malonyl-CoA. The protein is Acetyl-coenzyme A carboxylase carboxyl transferase subunit beta of Escherichia coli O6:K15:H31 (strain 536 / UPEC).